We begin with the raw amino-acid sequence, 1030 residues long: Halotolerance protein 9 (1030 aa).

A DNA-binding region (zn(2)-C6 fungal-type) is located at residues 136–166 (CDHCRKRKIRCDEVDQQTKKCSNCIKFQLPC). The segment at 185–208 (HHATPGESLQTSNSISNPVASSSV) is disordered. Over residues 196 to 208 (SNSISNPVASSSV) the composition is skewed to low complexity. Ser221 and Ser937 each carry phosphoserine.

It is found in the cytoplasm. It localises to the nucleus. In terms of biological role, putative transcription factor involved in halotolerance. In Saccharomyces cerevisiae (strain ATCC 204508 / S288c) (Baker's yeast), this protein is Halotolerance protein 9 (HAL9).